The following is an 811-amino-acid chain: tRNA(Met) cytidine acetyltransferase TmcA (811 aa).

Glutamine 267 and arginine 440 together coordinate ATP. Residues arginine 474–proline 663 form the N-acetyltransferase domain. Acetyl-CoA contacts are provided by residues isoleucine 590–threonine 592, glutamate 630, and arginine 637.

It belongs to the TmcA family.

The protein localises to the cytoplasm. The catalysed reaction is cytidine(34) in elongator tRNA(Met) + acetyl-CoA + ATP + H2O = N(4)-acetylcytidine(34) in elongator tRNA(Met) + ADP + phosphate + CoA + H(+). It carries out the reaction a cytidine in RNA + acetyl-CoA + ATP + H2O = an N(4)-acetylcytidine in RNA + ADP + phosphate + CoA + H(+). The enzyme catalyses a cytidine in tRNA + acetyl-CoA + ATP + H2O = an N(4)-acetylcytidine in tRNA + ADP + phosphate + CoA + H(+). It catalyses the reaction a cytidine in mRNA + acetyl-CoA + ATP + H2O = an N(4)-acetylcytidine in mRNA + ADP + phosphate + CoA + H(+). Functionally, catalyzes the formation of N(4)-acetylcytidine (ac(4)C) at the wobble position of tRNA(Met), by using acetyl-CoA as an acetyl donor and ATP (or GTP). In terms of biological role, catalyzes the formation of 404 N(4)-acetylcytidine (ac(4)C) sites in RNA, almost always on the middle C of a CCG motif. There 173 ac(4)C sites in rRNA, 35 in non-coding (nc)RNA, 119 in mRNA and 77 in tRNA. More acetylation is observed at 85 and 95 than at 65 or 75 degrees Celsius. In Thermococcus kodakarensis (strain ATCC BAA-918 / JCM 12380 / KOD1) (Pyrococcus kodakaraensis (strain KOD1)), this protein is tRNA(Met) cytidine acetyltransferase TmcA.